Consider the following 364-residue polypeptide: tRNA-specific 2-thiouridylase MnmA 1 (364 aa).

ATP is bound by residues 11 to 18 and phenylalanine 37; that span reads GMSGGTDS. The Nucleophile role is filled by cysteine 96. A disulfide bridge links cysteine 96 with cysteine 193. Glycine 120 is a binding site for ATP. Residues 142-144 are interaction with tRNA; the sequence is KDQ. Cysteine 193 (cysteine persulfide intermediate) is an active-site residue. Positions 309 to 310 are interaction with tRNA; it reads RY.

Belongs to the MnmA/TRMU family.

The protein localises to the cytoplasm. The catalysed reaction is S-sulfanyl-L-cysteinyl-[protein] + uridine(34) in tRNA + AH2 + ATP = 2-thiouridine(34) in tRNA + L-cysteinyl-[protein] + A + AMP + diphosphate + H(+). In terms of biological role, catalyzes the 2-thiolation of uridine at the wobble position (U34) of tRNA, leading to the formation of s(2)U34. This is tRNA-specific 2-thiouridylase MnmA 1 from Bacteroides fragilis (strain YCH46).